Here is a 166-residue protein sequence, read N- to C-terminus: RNA pyrophosphohydrolase (166 aa).

Residues 8-158 (PYRSCVGMML…KRPVYERVVK (151 aa)) form the Nudix hydrolase domain. Residues 47–68 (GGIDPGEDYWEAAQRELLEETN) carry the Nudix box motif.

The protein belongs to the Nudix hydrolase family. RppH subfamily. Requires a divalent metal cation as cofactor.

Its function is as follows. Accelerates the degradation of transcripts by removing pyrophosphate from the 5'-end of triphosphorylated RNA, leading to a more labile monophosphorylated state that can stimulate subsequent ribonuclease cleavage. The sequence is that of RNA pyrophosphohydrolase from Afipia carboxidovorans (strain ATCC 49405 / DSM 1227 / KCTC 32145 / OM5) (Oligotropha carboxidovorans).